We begin with the raw amino-acid sequence, 169 residues long: Small ribosomal subunit protein uS5c (169 aa).

In terms of domain architecture, S5 DRBM spans 17 to 80 (WQERVIQVRR…TDGRKNLINI (64 aa)).

It belongs to the universal ribosomal protein uS5 family. As to quaternary structure, part of the 30S ribosomal subunit. Contacts protein S4.

The protein localises to the plastid. Its subcellular location is the chloroplast. Functionally, with S4 and S12 plays an important role in translational accuracy. The sequence is that of Small ribosomal subunit protein uS5c (rps5) from Guillardia theta (Cryptophyte).